A 253-amino-acid chain; its full sequence is Glucosamine-6-phosphate deaminase (253 aa).

The active-site Proton acceptor; for enolization step is D65. N133 acts as the For ring-opening step in catalysis. H135 (proton acceptor; for ring-opening step) is an active-site residue. The active-site For ring-opening step is the E140.

The protein belongs to the glucosamine/galactosamine-6-phosphate isomerase family. NagB subfamily.

The catalysed reaction is alpha-D-glucosamine 6-phosphate + H2O = beta-D-fructose 6-phosphate + NH4(+). It functions in the pathway amino-sugar metabolism; N-acetylneuraminate degradation; D-fructose 6-phosphate from N-acetylneuraminate: step 5/5. In terms of biological role, catalyzes the reversible isomerization-deamination of glucosamine 6-phosphate (GlcN6P) to form fructose 6-phosphate (Fru6P) and ammonium ion. This chain is Glucosamine-6-phosphate deaminase, found in Corynebacterium efficiens (strain DSM 44549 / YS-314 / AJ 12310 / JCM 11189 / NBRC 100395).